A 546-amino-acid chain; its full sequence is Glucose-6-phosphate isomerase (546 aa).

The Proton donor role is filled by glutamate 353. Catalysis depends on residues histidine 384 and lysine 512.

It belongs to the GPI family.

It localises to the cytoplasm. The catalysed reaction is alpha-D-glucose 6-phosphate = beta-D-fructose 6-phosphate. It functions in the pathway carbohydrate biosynthesis; gluconeogenesis. It participates in carbohydrate degradation; glycolysis; D-glyceraldehyde 3-phosphate and glycerone phosphate from D-glucose: step 2/4. Its function is as follows. Catalyzes the reversible isomerization of glucose-6-phosphate to fructose-6-phosphate. This is Glucose-6-phosphate isomerase from Methylococcus capsulatus (strain ATCC 33009 / NCIMB 11132 / Bath).